We begin with the raw amino-acid sequence, 506 residues long: Probable E3 ubiquitin-protein ligase ARI14 (506 aa).

A TRIAD supradomain region spans residues 79–308 (PDSSSEISLE…VDSGFCIKTE (230 aa)). Residues 83–140 (SEISLETDVYEFDGDNDLISMPFCSHKFDSKYWREYLEKNFYYVEKIQTTISCPDQDC) form an RING-type 1 zinc finger. The Zn(2+) site is built by C106, H108, C135, C140, C180, C185, C207, C209, C214, C217, H222, C227, C258, C261, C277, C279, C284, C287, H294, and C304. Residues 158-227 (EMYERYIWRS…RLESHRPVSC (70 aa)) form an IBR-type zinc finger. The RING-type 2; atypical zinc finger occupies 258–287 (CPHCLCSLESDTKMPQFLTCVCRLRFCSRC). A RanBP2-type zinc finger spans residues 462-492 (GTGPFWYCDRCTYANTWEDNECEMCYDDSAS).

It belongs to the RBR family. Ariadne subfamily. Zn(2+) is required as a cofactor. In terms of tissue distribution, mostly expressed in closed flowers and, to a lower extent, in pollen.

The enzyme catalyses [E2 ubiquitin-conjugating enzyme]-S-ubiquitinyl-L-cysteine + [acceptor protein]-L-lysine = [E2 ubiquitin-conjugating enzyme]-L-cysteine + [acceptor protein]-N(6)-ubiquitinyl-L-lysine.. It functions in the pathway protein modification; protein ubiquitination. Might act as an E3 ubiquitin-protein ligase, or as part of E3 complex, which accepts ubiquitin from specific E2 ubiquitin-conjugating enzymes and then transfers it to substrates. Negatively regulates male gametophyte formation and double fertilization. The chain is Probable E3 ubiquitin-protein ligase ARI14 from Arabidopsis thaliana (Mouse-ear cress).